The chain runs to 248 residues: UDP-2,3-diacylglucosamine hydrolase (248 aa).

Mn(2+) is bound by residues D7, H9, D40, N78, and H113. Position 78–79 (78–79) interacts with substrate; sequence NR. Positions 121, 159, 163, 166, and 194 each coordinate substrate. Mn(2+) is bound by residues H194 and H196.

Belongs to the LpxH family. The cofactor is Mn(2+).

It localises to the cell inner membrane. It catalyses the reaction UDP-2-N,3-O-bis[(3R)-3-hydroxytetradecanoyl]-alpha-D-glucosamine + H2O = 2-N,3-O-bis[(3R)-3-hydroxytetradecanoyl]-alpha-D-glucosaminyl 1-phosphate + UMP + 2 H(+). Its pathway is glycolipid biosynthesis; lipid IV(A) biosynthesis; lipid IV(A) from (3R)-3-hydroxytetradecanoyl-[acyl-carrier-protein] and UDP-N-acetyl-alpha-D-glucosamine: step 4/6. Hydrolyzes the pyrophosphate bond of UDP-2,3-diacylglucosamine to yield 2,3-diacylglucosamine 1-phosphate (lipid X) and UMP by catalyzing the attack of water at the alpha-P atom. Involved in the biosynthesis of lipid A, a phosphorylated glycolipid that anchors the lipopolysaccharide to the outer membrane of the cell. This Pseudomonas syringae pv. tomato (strain ATCC BAA-871 / DC3000) protein is UDP-2,3-diacylglucosamine hydrolase.